A 307-amino-acid chain; its full sequence is Putative serpin A13 (307 aa).

A signal peptide spans 1–21 (MEASRWWLLVTVLMAGAHCVA). Residues N150 and N250 are each glycosylated (N-linked (GlcNAc...) asparagine).

The protein belongs to the serpin family.

The protein resides in the secreted. This is Putative serpin A13 (SERPINA13P) from Homo sapiens (Human).